The following is a 65-amino-acid chain: Large ribosomal subunit protein bL35 (65 aa).

It belongs to the bacterial ribosomal protein bL35 family.

The chain is Large ribosomal subunit protein bL35 from Borrelia duttonii (strain Ly).